A 207-amino-acid chain; its full sequence is dTTP/UTP pyrophosphatase (207 aa).

Residue D79 is the Proton acceptor of the active site.

Belongs to the Maf family. YhdE subfamily. It depends on a divalent metal cation as a cofactor.

Its subcellular location is the cytoplasm. It catalyses the reaction dTTP + H2O = dTMP + diphosphate + H(+). It carries out the reaction UTP + H2O = UMP + diphosphate + H(+). Nucleoside triphosphate pyrophosphatase that hydrolyzes dTTP and UTP. May have a dual role in cell division arrest and in preventing the incorporation of modified nucleotides into cellular nucleic acids. The chain is dTTP/UTP pyrophosphatase from Rhodopseudomonas palustris (strain ATCC BAA-98 / CGA009).